Here is a 429-residue protein sequence, read N- to C-terminus: Xaa-Pro dipeptidase (429 aa).

5 residues coordinate Mn(2+): aspartate 241, aspartate 252, histidine 334, glutamate 372, and glutamate 411.

It belongs to the peptidase M24B family. Bacterial-type prolidase subfamily. It depends on Mn(2+) as a cofactor.

The catalysed reaction is Xaa-L-Pro dipeptide + H2O = an L-alpha-amino acid + L-proline. Splits dipeptides with a prolyl residue in the C-terminal position. The sequence is that of Xaa-Pro dipeptidase from Marinobacter nauticus (strain ATCC 700491 / DSM 11845 / VT8) (Marinobacter aquaeolei).